A 157-amino-acid polypeptide reads, in one-letter code: Small ribosomal subunit protein uS7 (157 aa).

Belongs to the universal ribosomal protein uS7 family. In terms of assembly, part of the 30S ribosomal subunit. Contacts proteins S9 and S11.

Functionally, one of the primary rRNA binding proteins, it binds directly to 16S rRNA where it nucleates assembly of the head domain of the 30S subunit. Is located at the subunit interface close to the decoding center, probably blocks exit of the E-site tRNA. This chain is Small ribosomal subunit protein uS7, found in Chloroflexus aurantiacus (strain ATCC 29366 / DSM 635 / J-10-fl).